The chain runs to 271 residues: Oxamate carbamoyltransferase subunit AllH (271 aa).

The protein belongs to the AllH family. As to quaternary structure, the OXTCase is composed of 3 subunits, AllF, AllG and AllH. Mg(2+) serves as cofactor.

The catalysed reaction is oxamate + carbamoyl phosphate = N-carbamoyl-2-oxoglycine + phosphate. Its pathway is nitrogen metabolism; (S)-allantoin degradation. Functionally, component of a carbamoyltransferase involved in the anaerobic nitrogen utilization via the assimilation of allantoin. Catalyzes the conversion of oxalurate (N-carbamoyl-2-oxoglycine) to oxamate and carbamoyl phosphate. The protein is Oxamate carbamoyltransferase subunit AllH of Escherichia coli O157:H7.